The chain runs to 474 residues: Vitamin D-binding protein (474 aa).

Positions 1-16 (MKRILVFLLAVAFVHA) are cleaved as a signal peptide. Albumin domains lie at 17–208 (LERG…QLKH), 209–393 (FSLL…QLTR), and 394–474 (ELSS…TLQS). 2 disulfides stabilise this stretch: C29–C75 and C74–C83. N-linked (GlcNAc...) asparagine glycosylation occurs at N86. Cystine bridges form between C96–C112, C111–C122, C145–C190, C189–C198, C220–C266, C265–C273, C285–C299, C298–C310, C334–C375, C374–C383, C406–C452, and C451–C461. An N-linked (GlcNAc...) asparagine glycan is attached at N287.

It belongs to the ALB/AFP/VDB family. Associates with membrane-bound immunoglobulin on the surface of B-lymphocytes and with IgG Fc receptor on the membranes of T-lymphocytes. Interacts with LRP2; the interaction is required for renal uptake of GC in complex with 25-hydroxyvitamin D3.

It localises to the secreted. Its function is as follows. Involved in vitamin D transport and storage, scavenging of extracellular G-actin, enhancement of the chemotactic activity of C5 alpha for neutrophils in inflammation and macrophage activation. This Bos taurus (Bovine) protein is Vitamin D-binding protein (GC).